Here is a 269-residue protein sequence, read N- to C-terminus: Magnetosome protein MamX (269 aa).

At methionine 1–aspartate 10 the chain is on the cytoplasmic side. The chain crosses the membrane as a helical span at residues isoleucine 11–leucine 31. Topologically, residues phenylalanine 32–arginine 269 are lumenal. The MCR (magnetochrome) 1 signature appears at isoleucine 48–valine 71. Heme-binding residues include cysteine 65, cysteine 68, histidine 69, cysteine 104, cysteine 107, and histidine 108. The MCR 2 signature appears at isoleucine 87–isoleucine 110.

The protein belongs to the magnetosome MamX family. Probably interacts with FtsZ-like and MamY proteins. Requires heme as cofactor.

It localises to the magnetosome membrane. Functionally, required for correct biomineralization of the magnetosome, maybe via redox control. May function with MamY, MamZ amd Mms6 in biomineralization. The chain is Magnetosome protein MamX from Magnetospirillum gryphiswaldense (strain DSM 6361 / JCM 21280 / NBRC 15271 / MSR-1).